A 477-amino-acid polypeptide reads, in one-letter code: Inner membrane protein YbhI (477 aa).

Over 1–5 (MNKKS) the chain is Cytoplasmic. A helical membrane pass occupies residues 6-26 (LWKLILILAIPCIIGFMPAPA). Residue Gly27 is a topological domain, periplasmic. Residues 28–48 (LSELAWVLFGIYLAAIVGLVI) form a helical membrane-spanning segment. Topologically, residues 49–50 (KP) are cytoplasmic. The chain crosses the membrane as a helical span at residues 51-71 (FPEPVVLLIAVAASMVVVGNL). Residues 72 to 87 (SDGAFKTTAVLSGYSS) lie on the Periplasmic side of the membrane. The helical transmembrane segment at 88–108 (GTTWLVFSAFTLSAAFVTTGL) threads the bilayer. Residues 109–148 (GKRIAYLLIGKIGNTTLGLGYVTVFLDLVLAPATPSNTAR) are Cytoplasmic-facing. A helical transmembrane segment spans residues 149–169 (AGGIVLPIINSVAVALGSEPE). Topologically, residues 170–219 (KSPRRVGHYLMMSIYMVTKTTSYMFFTAMAGNILALKMINDILHLQISWG) are periplasmic. Residues 220-240 (GWALAAGLPGIIMLLVTPLVI) form a helical membrane-spanning segment. Topologically, residues 241-272 (YTMYPPEIKKVDNKTIAKAGLAELGPMKIREK) are cytoplasmic. Residues 273-293 (MLLGVFVLALLGWIFSKSLGV) form a helical membrane-spanning segment. Residues 294-297 (DEST) lie on the Periplasmic side of the membrane. The chain crosses the membrane as a helical span at residues 298–318 (VAIVVMATMLLLGIVTWEDVV). Topologically, residues 319–356 (KNKGGWNTLIWYGGIIGLSSLLSKVKFFEWLAEVFKNN) are cytoplasmic. The chain crosses the membrane as a helical span at residues 357–377 (LAFDGHGNVAFFVIIFLSIIV). Arg378 is a topological domain (periplasmic). Residues 379 to 399 (YFFASGSAYIVAMLPVFAMLA) form a helical membrane-spanning segment. The Cytoplasmic segment spans residues 400 to 445 (NVSGAPLMLTALALLFSNSYGGMVTHYGGAAGPVIFGVGYNDIKSW). Residues 446-466 (WLVGAVLTILTFLVHITLGVW) form a helical membrane-spanning segment. Residues 467–477 (WWNMLIGWNML) are Periplasmic-facing.

This sequence belongs to the SLC13A/DASS transporter (TC 2.A.47) family. DIT1 subfamily.

The protein resides in the cell inner membrane. The polypeptide is Inner membrane protein YbhI (ybhI) (Escherichia coli (strain K12)).